We begin with the raw amino-acid sequence, 201 residues long: LexA repressor (201 aa).

The segment at residues 29–49 (VREICKAVGLSSTSSVHFHLK) is a DNA-binding region (H-T-H motif). Catalysis depends on for autocatalytic cleavage activity residues S125 and K162.

It belongs to the peptidase S24 family. Homodimer.

It catalyses the reaction Hydrolysis of Ala-|-Gly bond in repressor LexA.. Represses a number of genes involved in the response to DNA damage (SOS response), including recA and lexA. In the presence of single-stranded DNA, RecA interacts with LexA causing an autocatalytic cleavage which disrupts the DNA-binding part of LexA, leading to derepression of the SOS regulon and eventually DNA repair. This is LexA repressor from Clostridium botulinum (strain 657 / Type Ba4).